The primary structure comprises 282 residues: Dihydroorotate dehydrogenase B (NAD(+)), electron transfer subunit homolog (282 aa).

In terms of domain architecture, FAD-binding FR-type spans 2–100; that stretch reads GGTALNEIVK…VGPLGNPSEI (99 aa). C225, C228, and C240 together coordinate [2Fe-2S] cluster.

Belongs to the PyrK family. It depends on [2Fe-2S] cluster as a cofactor. FAD is required as a cofactor.

The polypeptide is Dihydroorotate dehydrogenase B (NAD(+)), electron transfer subunit homolog (Thermotoga maritima (strain ATCC 43589 / DSM 3109 / JCM 10099 / NBRC 100826 / MSB8)).